A 232-amino-acid polypeptide reads, in one-letter code: Orotate phosphoribosyltransferase (232 aa).

Residues Arg107, Lys108, Lys111, and 133 to 141 each bind 5-phospho-alpha-D-ribose 1-diphosphate; that span reads EDLTTDGGS. Thr137 contacts orotate.

The protein belongs to the purine/pyrimidine phosphoribosyltransferase family. PyrE subfamily. Homodimer. Mg(2+) serves as cofactor.

The enzyme catalyses orotidine 5'-phosphate + diphosphate = orotate + 5-phospho-alpha-D-ribose 1-diphosphate. Its pathway is pyrimidine metabolism; UMP biosynthesis via de novo pathway; UMP from orotate: step 1/2. Its function is as follows. Catalyzes the transfer of a ribosyl phosphate group from 5-phosphoribose 1-diphosphate to orotate, leading to the formation of orotidine monophosphate (OMP). The chain is Orotate phosphoribosyltransferase from Cereibacter sphaeroides (strain ATCC 17025 / ATH 2.4.3) (Rhodobacter sphaeroides).